The primary structure comprises 188 residues: Ribosome-recycling factor (188 aa).

The protein belongs to the RRF family.

Its subcellular location is the cytoplasm. Its function is as follows. Responsible for the release of ribosomes from messenger RNA at the termination of protein biosynthesis. May increase the efficiency of translation by recycling ribosomes from one round of translation to another. The protein is Ribosome-recycling factor of Gluconobacter oxydans (strain 621H) (Gluconobacter suboxydans).